Reading from the N-terminus, the 322-residue chain is 4-hydroxy-3-methylbut-2-enyl diphosphate reductase (322 aa).

Residue Cys-15 participates in [4Fe-4S] cluster binding. Positions 44 and 77 each coordinate (2E)-4-hydroxy-3-methylbut-2-enyl diphosphate. Residues His-44 and His-77 each contribute to the dimethylallyl diphosphate site. Positions 44 and 77 each coordinate isopentenyl diphosphate. Position 99 (Cys-99) interacts with [4Fe-4S] cluster. His-127 provides a ligand contact to (2E)-4-hydroxy-3-methylbut-2-enyl diphosphate. His-127 contributes to the dimethylallyl diphosphate binding site. His-127 is an isopentenyl diphosphate binding site. Glu-129 functions as the Proton donor in the catalytic mechanism. Thr-168 provides a ligand contact to (2E)-4-hydroxy-3-methylbut-2-enyl diphosphate. Cys-198 contacts [4Fe-4S] cluster. 4 residues coordinate (2E)-4-hydroxy-3-methylbut-2-enyl diphosphate: Ser-226, Ser-227, Asn-228, and Ser-270. Residues Ser-226, Ser-227, Asn-228, and Ser-270 each coordinate dimethylallyl diphosphate. Isopentenyl diphosphate is bound by residues Ser-226, Ser-227, Asn-228, and Ser-270.

This sequence belongs to the IspH family. The cofactor is [4Fe-4S] cluster.

The catalysed reaction is isopentenyl diphosphate + 2 oxidized [2Fe-2S]-[ferredoxin] + H2O = (2E)-4-hydroxy-3-methylbut-2-enyl diphosphate + 2 reduced [2Fe-2S]-[ferredoxin] + 2 H(+). The enzyme catalyses dimethylallyl diphosphate + 2 oxidized [2Fe-2S]-[ferredoxin] + H2O = (2E)-4-hydroxy-3-methylbut-2-enyl diphosphate + 2 reduced [2Fe-2S]-[ferredoxin] + 2 H(+). Its pathway is isoprenoid biosynthesis; dimethylallyl diphosphate biosynthesis; dimethylallyl diphosphate from (2E)-4-hydroxy-3-methylbutenyl diphosphate: step 1/1. It participates in isoprenoid biosynthesis; isopentenyl diphosphate biosynthesis via DXP pathway; isopentenyl diphosphate from 1-deoxy-D-xylulose 5-phosphate: step 6/6. Catalyzes the conversion of 1-hydroxy-2-methyl-2-(E)-butenyl 4-diphosphate (HMBPP) into a mixture of isopentenyl diphosphate (IPP) and dimethylallyl diphosphate (DMAPP). Acts in the terminal step of the DOXP/MEP pathway for isoprenoid precursor biosynthesis. In Neisseria meningitidis serogroup C (strain 053442), this protein is 4-hydroxy-3-methylbut-2-enyl diphosphate reductase.